We begin with the raw amino-acid sequence, 250 residues long: MGQKVHPVGIRLGVVKRHNANWYANPKQYAEYLLKDLQVREFLTKKLKNAMVSNILIERPSGAAKVTISTARPGIVIGKKGEDIEKLQRELTNIMGVPAQVSINEIDRPDLDARLVAEAIASQLEKRVMFRRAMKRAVQNTMRAGAKGIKVEVSGRLGGAEIARTEWYREGRVPLHTLRADIDYATMRAETTYGTIGVKVWIFRGEILGGMKQVMNPAPAEERPAKRGRGRGEGQERRGRRGDRAADKGE.

In terms of domain architecture, KH type-2 spans 39–107 (VREFLTKKLK…PAQVSINEID (69 aa)). The disordered stretch occupies residues 215–250 (MNPAPAEERPAKRGRGRGEGQERRGRRGDRAADKGE). The segment covering 220–250 (AEERPAKRGRGRGEGQERRGRRGDRAADKGE) has biased composition (basic and acidic residues).

This sequence belongs to the universal ribosomal protein uS3 family. In terms of assembly, part of the 30S ribosomal subunit. Forms a tight complex with proteins S10 and S14.

Its function is as follows. Binds the lower part of the 30S subunit head. Binds mRNA in the 70S ribosome, positioning it for translation. The protein is Small ribosomal subunit protein uS3 of Acinetobacter baumannii (strain SDF).